Reading from the N-terminus, the 55-residue chain is MADVLRRAINQKKQFLKTKLLLSEFYQGRGEQLADYTLSELEKEYKSLQKMKKEI.

This is an uncharacterized protein from Bacillus subtilis (strain 168).